The chain runs to 160 residues: Endoribonuclease YbeY (160 aa).

Residues histidine 118, histidine 122, and histidine 128 each coordinate Zn(2+).

It belongs to the endoribonuclease YbeY family. Zn(2+) is required as a cofactor.

The protein localises to the cytoplasm. Functionally, single strand-specific metallo-endoribonuclease involved in late-stage 70S ribosome quality control and in maturation of the 3' terminus of the 16S rRNA. The polypeptide is Endoribonuclease YbeY (Treponema pallidum (strain Nichols)).